Reading from the N-terminus, the 375-residue chain is MSCPVIELTQQLIRRPSLSPDDAGCQALLIERLQAIGFTVERMDFADTQNFWAWRGQGETLAFAGHTDVVPPGDADRWINPPFEPTIRDGMLFGRGAADMKGSLAAMVVAAERFVAQHPNHTGRLAFLITSDEEASAHNGTVKVVEALMARNERLDYCLVGEPSSIEVVGDVVKNGRRGSLTCNLTIHGVQGHVAYPHLADNPVHRAAPFLNELVAIEWDQGNEFFPATSMQIANIQAGTGSNNVIPGELFVQFNFRFSTELTDEMIKAQVLALLEKHQLRYTVDWWLSGQPFLTARGKLVDAVVNAVEHYNEIKPQLLTTGGTSDGRFIARMGAQVVELGPVNATIHKINECVNAADLQLLARMYQRIMEQLVA.

His66 contacts Zn(2+). Residue Asp68 is part of the active site. Residue Asp99 coordinates Zn(2+). The active-site Proton acceptor is the Glu133. Zn(2+)-binding residues include Glu134, Glu162, and His348.

It belongs to the peptidase M20A family. DapE subfamily. Homodimer. Zn(2+) serves as cofactor. It depends on Co(2+) as a cofactor.

The enzyme catalyses N-succinyl-(2S,6S)-2,6-diaminopimelate + H2O = (2S,6S)-2,6-diaminopimelate + succinate. Its pathway is amino-acid biosynthesis; L-lysine biosynthesis via DAP pathway; LL-2,6-diaminopimelate from (S)-tetrahydrodipicolinate (succinylase route): step 3/3. Its function is as follows. Catalyzes the hydrolysis of N-succinyl-L,L-diaminopimelic acid (SDAP), forming succinate and LL-2,6-diaminopimelate (DAP), an intermediate involved in the bacterial biosynthesis of lysine and meso-diaminopimelic acid, an essential component of bacterial cell walls. This chain is Succinyl-diaminopimelate desuccinylase, found in Escherichia coli O139:H28 (strain E24377A / ETEC).